Reading from the N-terminus, the 140-residue chain is Smith-Magenis syndrome chromosomal region candidate gene 5 protein (140 aa).

The disordered stretch occupies residues 43-77 (CTGPSSQAPPQPPQASPPAAADHSRTPSLLASSHS). Over residues 49 to 58 (QAPPQPPQAS) the composition is skewed to pro residues.

In terms of tissue distribution, widely expressed.

This chain is Smith-Magenis syndrome chromosomal region candidate gene 5 protein (SMCR5), found in Homo sapiens (Human).